The chain runs to 108 residues: uncharacterized protein (108 aa).

Helical transmembrane passes span serine 10–asparagine 32, isoleucine 45–alanine 67, and phenylalanine 77–isoleucine 99.

The protein localises to the cell membrane. This is an uncharacterized protein from Bacillus subtilis (strain 168).